The sequence spans 461 residues: Photosystem II CP43 reaction center protein (461 aa).

Positions methionine 1–glutamate 2 are excised as a propeptide. Threonine 3 bears the N-acetylthreonine mark. Residue threonine 3 is modified to Phosphothreonine. Transmembrane regions (helical) follow at residues leucine 57–alanine 81, leucine 122–asparagine 143, lysine 166–serine 188, lysine 243–serine 263, and tryptophan 279–alanine 300. Glutamate 355 contributes to the [CaMn4O5] cluster binding site. A helical membrane pass occupies residues arginine 435 to proline 459.

It belongs to the PsbB/PsbC family. PsbC subfamily. In terms of assembly, PSII is composed of 1 copy each of membrane proteins PsbA, PsbB, PsbC, PsbD, PsbE, PsbF, PsbH, PsbI, PsbJ, PsbK, PsbL, PsbM, PsbT, PsbX, PsbY, PsbZ, Psb30/Ycf12, at least 3 peripheral proteins of the oxygen-evolving complex and a large number of cofactors. It forms dimeric complexes. Binds multiple chlorophylls and provides some of the ligands for the Ca-4Mn-5O cluster of the oxygen-evolving complex. It may also provide a ligand for a Cl- that is required for oxygen evolution. PSII binds additional chlorophylls, carotenoids and specific lipids. is required as a cofactor.

The protein localises to the plastid. The protein resides in the chloroplast thylakoid membrane. Functionally, one of the components of the core complex of photosystem II (PSII). It binds chlorophyll and helps catalyze the primary light-induced photochemical processes of PSII. PSII is a light-driven water:plastoquinone oxidoreductase, using light energy to abstract electrons from H(2)O, generating O(2) and a proton gradient subsequently used for ATP formation. In Oltmannsiellopsis viridis (Marine flagellate), this protein is Photosystem II CP43 reaction center protein.